The primary structure comprises 89 residues: Neuropeptide S (89 aa).

The N-terminal stretch at 1 to 23 is a signal peptide; the sequence is MIGSLKFNFILFLLISTMHMFWC. The propeptide occupies 24 to 67; it reads HPISSSKVPGKSDYFVILLNSCPTRMDRRVGLDFLKPILEKTLM.

The protein localises to the secreted. Its function is as follows. Modulates arousal and anxiety. May play an important anorexigenic role. Binds to its receptor NPSR1 with nanomolar affinity to increase intracellular calcium concentrations. This is Neuropeptide S (NPS) from Bos taurus (Bovine).